The sequence spans 154 residues: Large ribosomal subunit protein uL22 (154 aa).

It belongs to the universal ribosomal protein uL22 family. As to quaternary structure, part of the 50S ribosomal subunit.

This protein binds specifically to 23S rRNA. It makes multiple contacts with different domains of the 23S rRNA in the assembled 50S subunit and ribosome. Its function is as follows. The globular domain of the protein is located near the polypeptide exit tunnel on the outside of the subunit, while an extended beta-hairpin is found that lines the wall of the exit tunnel in the center of the 70S ribosome. The sequence is that of Large ribosomal subunit protein uL22 from Natronomonas pharaonis (strain ATCC 35678 / DSM 2160 / CIP 103997 / JCM 8858 / NBRC 14720 / NCIMB 2260 / Gabara) (Halobacterium pharaonis).